A 290-amino-acid chain; its full sequence is Membrane protein insertase YidC (290 aa).

A signal peptide spans 1–19; it reads MKKKTLLPLFLGIMVFLAG. The N-palmitoyl cysteine moiety is linked to residue Cys-20. Cys-20 carries the S-diacylglycerol cysteine lipid modification. 5 helical membrane-spanning segments follow: residues 56 to 76, 134 to 154, 176 to 196, 207 to 224, and 229 to 251; these read YGLAIIILVLVIRIILLPFML, MLGCLPMLIQLPIIMGLYFVL, PDIWITIIAGVLYFIQAYVSS, GYMMMVISPIMIIWISLS, and LGLYWSVSAAFLVVQTHFANIYY. Positions 270–290 are disordered; the sequence is HNGGSNKKGKNTQVVSKKKKK.

This sequence belongs to the OXA1/ALB3/YidC family. Type 2 subfamily.

It localises to the cell membrane. Required for the insertion and/or proper folding and/or complex formation of integral membrane proteins into the membrane. Involved in integration of membrane proteins that insert both dependently and independently of the Sec translocase complex, as well as at least some lipoproteins. This Staphylococcus aureus (strain MRSA252) protein is Membrane protein insertase YidC.